The chain runs to 120 residues: Holo-[acyl-carrier-protein] synthase (120 aa).

D8 and E60 together coordinate Mg(2+).

Belongs to the P-Pant transferase superfamily. AcpS family. It depends on Mg(2+) as a cofactor.

It localises to the cytoplasm. It catalyses the reaction apo-[ACP] + CoA = holo-[ACP] + adenosine 3',5'-bisphosphate + H(+). In terms of biological role, transfers the 4'-phosphopantetheine moiety from coenzyme A to a Ser of acyl-carrier-protein. The polypeptide is Holo-[acyl-carrier-protein] synthase (Anaplasma marginale (strain St. Maries)).